We begin with the raw amino-acid sequence, 236 residues long: 1-(5-phosphoribosyl)-5-[(5-phosphoribosylamino)methylideneamino] imidazole-4-carboxamide isomerase (236 aa).

Asp-8 serves as the catalytic Proton acceptor. Catalysis depends on Asp-127, which acts as the Proton donor.

This sequence belongs to the HisA/HisF family.

Its subcellular location is the cytoplasm. The catalysed reaction is 1-(5-phospho-beta-D-ribosyl)-5-[(5-phospho-beta-D-ribosylamino)methylideneamino]imidazole-4-carboxamide = 5-[(5-phospho-1-deoxy-D-ribulos-1-ylimino)methylamino]-1-(5-phospho-beta-D-ribosyl)imidazole-4-carboxamide. Its pathway is amino-acid biosynthesis; L-histidine biosynthesis; L-histidine from 5-phospho-alpha-D-ribose 1-diphosphate: step 4/9. The chain is 1-(5-phosphoribosyl)-5-[(5-phosphoribosylamino)methylideneamino] imidazole-4-carboxamide isomerase from Campylobacter fetus subsp. fetus (strain 82-40).